We begin with the raw amino-acid sequence, 415 residues long: Phosphopentomutase (415 aa).

Residues Asp10, Asp313, His318, Asp354, His355, and His366 each coordinate Mn(2+).

This sequence belongs to the phosphopentomutase family. The cofactor is Mn(2+).

The protein localises to the cytoplasm. It catalyses the reaction 2-deoxy-alpha-D-ribose 1-phosphate = 2-deoxy-D-ribose 5-phosphate. The enzyme catalyses alpha-D-ribose 1-phosphate = D-ribose 5-phosphate. Its pathway is carbohydrate degradation; 2-deoxy-D-ribose 1-phosphate degradation; D-glyceraldehyde 3-phosphate and acetaldehyde from 2-deoxy-alpha-D-ribose 1-phosphate: step 1/2. In terms of biological role, isomerase that catalyzes the conversion of deoxy-ribose 1-phosphate (dRib-1-P) and ribose 1-phosphate (Rib-1-P) to deoxy-ribose 5-phosphate (dRib-5-P) and ribose 5-phosphate (Rib-5-P), respectively. This Psychromonas ingrahamii (strain DSM 17664 / CCUG 51855 / 37) protein is Phosphopentomutase.